The chain runs to 176 residues: dCTP deaminase (176 aa).

DCTP is bound by residues 99-104 and Asp-115; that span reads RSTLAR. Glu-125 acts as the Proton donor/acceptor in catalysis. Gln-163 is a dCTP binding site.

It belongs to the dCTP deaminase family. In terms of assembly, homotrimer.

The enzyme catalyses dCTP + H2O + H(+) = dUTP + NH4(+). Its pathway is pyrimidine metabolism; dUMP biosynthesis; dUMP from dCTP (dUTP route): step 1/2. Catalyzes the deamination of dCTP to dUTP. This Pyrobaculum aerophilum (strain ATCC 51768 / DSM 7523 / JCM 9630 / CIP 104966 / NBRC 100827 / IM2) protein is dCTP deaminase.